The primary structure comprises 245 residues: Phosphoadenosine 5'-phosphosulfate reductase (245 aa).

The Nucleophile; cysteine thiosulfonate intermediate role is filled by cysteine 239.

Belongs to the PAPS reductase family. CysH subfamily.

It is found in the cytoplasm. It carries out the reaction [thioredoxin]-disulfide + sulfite + adenosine 3',5'-bisphosphate + 2 H(+) = [thioredoxin]-dithiol + 3'-phosphoadenylyl sulfate. Its pathway is sulfur metabolism; hydrogen sulfide biosynthesis; sulfite from sulfate: step 3/3. Functionally, catalyzes the formation of sulfite from phosphoadenosine 5'-phosphosulfate (PAPS) using thioredoxin as an electron donor. This chain is Phosphoadenosine 5'-phosphosulfate reductase, found in Alkalilimnicola ehrlichii (strain ATCC BAA-1101 / DSM 17681 / MLHE-1).